We begin with the raw amino-acid sequence, 446 residues long: Ubiquitin carboxyl-terminal hydrolase MINDY-3 (446 aa).

Cysteine 51 (nucleophile) is an active-site residue. A compositionally biased stretch (basic and acidic residues) spans 117–128; that stretch reads DNSDITDSHPEP. The interval 117-137 is disordered; the sequence is DNSDITDSHPEPESSQPTDTP. Histidine 288 acts as the Proton acceptor in catalysis.

The protein belongs to the MINDY deubiquitinase family. FAM188 subfamily.

Its subcellular location is the nucleus. The catalysed reaction is Thiol-dependent hydrolysis of ester, thioester, amide, peptide and isopeptide bonds formed by the C-terminal Gly of ubiquitin (a 76-residue protein attached to proteins as an intracellular targeting signal).. In terms of biological role, hydrolase that can remove 'Lys-48'-linked conjugated ubiquitin from proteins. This Danio rerio (Zebrafish) protein is Ubiquitin carboxyl-terminal hydrolase MINDY-3 (mindy3).